The primary structure comprises 703 residues: uncharacterized protein (703 aa).

Helical transmembrane passes span 23–43 (IAMSGAISAGAYSAGVFDFLI), 69–89 (ALSGASAGAITAAIGVIAAGG), 143–163 (PVISVLNANVLTAIGAEALEA), and 250–270 (PPEWLAFANAALASGAFPIGL). One can recognise a PNPLA domain in the interval 23–335 (IAMSGAISAG…INNDPFEFVR (313 aa)). Positions 72–76 (GASAG) match the GXSXG motif. S74 serves as the catalytic Nucleophile. The Proton acceptor role is filled by D322. Positions 322–324 (DGG) match the DGA/G motif. 3 helical membrane-spanning segments follow: residues 357–377 (VIMIAPFPEGPPFLGDGEPPL), 432–452 (ETFSIASGLLGGFGGFVLEAF), and 644–664 (ILSTLAGAAGANCQVWLAPWT).

The protein localises to the cell membrane. This is an uncharacterized protein from Sinorhizobium fredii (strain NBRC 101917 / NGR234).